The chain runs to 434 residues: Enolase (434 aa).

Gln165 lines the (2R)-2-phosphoglycerate pocket. Residue Glu207 is the Proton donor of the active site. Mg(2+)-binding residues include Asp244, Glu291, and Asp318. Residues Lys343, Arg372, Ser373, and Lys394 each contribute to the (2R)-2-phosphoglycerate site. Lys343 (proton acceptor) is an active-site residue.

This sequence belongs to the enolase family. The cofactor is Mg(2+).

It is found in the cytoplasm. The protein localises to the secreted. It localises to the cell surface. The enzyme catalyses (2R)-2-phosphoglycerate = phosphoenolpyruvate + H2O. The protein operates within carbohydrate degradation; glycolysis; pyruvate from D-glyceraldehyde 3-phosphate: step 4/5. Its function is as follows. Catalyzes the reversible conversion of 2-phosphoglycerate (2-PG) into phosphoenolpyruvate (PEP). It is essential for the degradation of carbohydrates via glycolysis. This Staphylococcus epidermidis (strain ATCC 35984 / DSM 28319 / BCRC 17069 / CCUG 31568 / BM 3577 / RP62A) protein is Enolase.